Consider the following 368-residue polypeptide: Putative zinc metalloprotease Cj1068 (368 aa).

Residue His36 coordinates Zn(2+). Glu37 is an active-site residue. Zn(2+) is bound at residue His40. Transmembrane regions (helical) follow at residues 112-134 (IYIL…IIIG), 291-313 (FTLL…LLPI), and 338-360 (TFEY…ATYN). The PDZ domain occupies 126–197 (AFFLYIIIGN…LKILINREGK (72 aa)).

Belongs to the peptidase M50B family. Requires Zn(2+) as cofactor.

Its subcellular location is the cell inner membrane. The polypeptide is Putative zinc metalloprotease Cj1068 (Campylobacter jejuni subsp. jejuni serotype O:2 (strain ATCC 700819 / NCTC 11168)).